We begin with the raw amino-acid sequence, 101 residues long: CRISPR-associated endoribonuclease Cas2 (101 aa).

Position 8 (Asp8) interacts with Mg(2+).

The protein belongs to the CRISPR-associated endoribonuclease Cas2 protein family. In terms of assembly, homodimer, forms a heterotetramer with a Cas1 homodimer. It depends on Mg(2+) as a cofactor.

CRISPR (clustered regularly interspaced short palindromic repeat), is an adaptive immune system that provides protection against mobile genetic elements (viruses, transposable elements and conjugative plasmids). CRISPR clusters contain sequences complementary to antecedent mobile elements and target invading nucleic acids. CRISPR clusters are transcribed and processed into CRISPR RNA (crRNA). Functions as a ssRNA-specific endoribonuclease. Involved in the integration of spacer DNA into the CRISPR cassette. The polypeptide is CRISPR-associated endoribonuclease Cas2 (Parvibaculum lavamentivorans (strain DS-1 / DSM 13023 / NCIMB 13966)).